The primary structure comprises 442 residues: Metacaspase-5 (442 aa).

An N-terminal signal peptide occupies residues 1–18; it reads MDLLLGVLSSGILQNALP. The segment at 19–62 is important for catalytic activity; sequence FVAGVGRVKRPKRVKLEEAFREAHLCRPVIPYRAPTPYTGGRVK. Asn69 and Asn112 each carry an N-linked (GlcNAc...) asparagine glycan. His146 is a catalytic residue. 3 residues coordinate Ca(2+): Asp161, Asp177, and Asp178. Residue Cys201 is part of the active site. Asp208 is a Ca(2+) binding site. N-linked (GlcNAc...) asparagine glycosylation is found at Asn234, Asn257, Asn282, and Asn331. The negatively regulates catalytic activity stretch occupies residues 336–442; that stretch reads HYVPQQYLQP…QYLSGVGKPL (107 aa). Residues 348 to 371 show a composition bias toward pro residues; sequence PPQPYYPPPQPQQPYYPPPQPQQP. The tract at residues 348–442 is disordered; that stretch reads PPQPYYPPPQ…QYLSGVGKPL (95 aa). The span at 372-382 shows a compositional bias: low complexity; sequence YYPSSQLPTQY. Residues 422–434 show a composition bias toward polar residues; that stretch reads PSDQSTYYSSAQY.

The protein belongs to the peptidase C14B family. In epimastigotes, the unprocessed enzyme appears to be the main form. Auto-processing is dispensable for catalytic activity towards small oligopeptide substrates.

Its subcellular location is the recycling endosome. With respect to regulation, activated by Ca(2+). Functionally, cysteine protease that cleaves specifically after arginine or lysine residues. May play a role in apoptosis. The protein is Metacaspase-5 of Trypanosoma cruzi (strain CL Brener).